We begin with the raw amino-acid sequence, 1062 residues long: Carbamoyl phosphate synthase large chain (1062 aa).

A carboxyphosphate synthetic domain region spans residues 1-401; sequence MPKRTDIHKI…AMQKAVQSLE (401 aa). ATP is bound by residues arginine 129, arginine 169, glycine 175, glycine 176, lysine 208, isoleucine 210, glutamate 215, glycine 241, isoleucine 242, histidine 243, glutamine 284, and glutamate 298. The ATP-grasp 1 domain occupies 133–327; it reads KELCQKLGEP…IAKMAAKIAI (195 aa). Positions 284, 298, and 300 each coordinate Mg(2+). Residues glutamine 284, glutamate 298, and asparagine 300 each coordinate Mn(2+). The segment at 402-546 is oligomerization domain; the sequence is IDEKDLYSAK…YSTYDGENES (145 aa). The segment at 547–929 is carbamoyl phosphate synthetic domain; sequence RKSGKKSVIV…ALYKAFAGAK (383 aa). An ATP-grasp 2 domain is found at 671–861; the sequence is DQIIKSLHLH…MAQVATRVIM (191 aa). Arginine 707, aspartate 746, leucine 748, glutamate 752, glycine 777, valine 778, histidine 779, serine 780, glutamine 820, and glutamate 832 together coordinate ATP. Mg(2+)-binding residues include glutamine 820, glutamate 832, and asparagine 834. The Mn(2+) site is built by glutamine 820, glutamate 832, and asparagine 834. The MGS-like domain maps to 930 to 1062; the sequence is MQLPENGNVL…NRSFATDALK (133 aa). Positions 930 to 1062 are allosteric domain; it reads MQLPENGNVL…NRSFATDALK (133 aa).

The protein belongs to the CarB family. Composed of two chains; the small (or glutamine) chain promotes the hydrolysis of glutamine to ammonia, which is used by the large (or ammonia) chain to synthesize carbamoyl phosphate. Tetramer of heterodimers (alpha,beta)4. Mg(2+) is required as a cofactor. The cofactor is Mn(2+).

The catalysed reaction is hydrogencarbonate + L-glutamine + 2 ATP + H2O = carbamoyl phosphate + L-glutamate + 2 ADP + phosphate + 2 H(+). It catalyses the reaction hydrogencarbonate + NH4(+) + 2 ATP = carbamoyl phosphate + 2 ADP + phosphate + 2 H(+). Its pathway is amino-acid biosynthesis; L-arginine biosynthesis; carbamoyl phosphate from bicarbonate: step 1/1. It functions in the pathway pyrimidine metabolism; UMP biosynthesis via de novo pathway; (S)-dihydroorotate from bicarbonate: step 1/3. Its function is as follows. Large subunit of the glutamine-dependent carbamoyl phosphate synthetase (CPSase). CPSase catalyzes the formation of carbamoyl phosphate from the ammonia moiety of glutamine, carbonate, and phosphate donated by ATP, constituting the first step of 2 biosynthetic pathways, one leading to arginine and/or urea and the other to pyrimidine nucleotides. The large subunit (synthetase) binds the substrates ammonia (free or transferred from glutamine from the small subunit), hydrogencarbonate and ATP and carries out an ATP-coupled ligase reaction, activating hydrogencarbonate by forming carboxy phosphate which reacts with ammonia to form carbamoyl phosphate. This is Carbamoyl phosphate synthase large chain from Lactobacillus helveticus (strain DPC 4571).